The following is a 107-amino-acid chain: Iron-sulfur cluster assembly protein CyaY (107 aa).

It belongs to the frataxin family.

Functionally, involved in iron-sulfur (Fe-S) cluster assembly. May act as a regulator of Fe-S biogenesis. This is Iron-sulfur cluster assembly protein CyaY from Neisseria meningitidis serogroup B (strain ATCC BAA-335 / MC58).